We begin with the raw amino-acid sequence, 704 residues long: DNA ligase (704 aa).

NAD(+) contacts are provided by residues 43–47 (DADYD), 92–93 (SL), and Glu-124. The active-site N6-AMP-lysine intermediate is the Lys-126. NAD(+)-binding residues include Arg-147, Glu-182, Lys-298, and Lys-322. Zn(2+)-binding residues include Cys-427, Cys-430, Cys-445, and Cys-451. The 80-residue stretch at 625 to 704 (PVASPVAGKI…DGWLRLIGDA (80 aa)) folds into the BRCT domain.

This sequence belongs to the NAD-dependent DNA ligase family. LigA subfamily. Mg(2+) is required as a cofactor. Requires Mn(2+) as cofactor.

The enzyme catalyses NAD(+) + (deoxyribonucleotide)n-3'-hydroxyl + 5'-phospho-(deoxyribonucleotide)m = (deoxyribonucleotide)n+m + AMP + beta-nicotinamide D-nucleotide.. DNA ligase that catalyzes the formation of phosphodiester linkages between 5'-phosphoryl and 3'-hydroxyl groups in double-stranded DNA using NAD as a coenzyme and as the energy source for the reaction. It is essential for DNA replication and repair of damaged DNA. The chain is DNA ligase from Cereibacter sphaeroides (strain ATCC 17029 / ATH 2.4.9) (Rhodobacter sphaeroides).